The primary structure comprises 763 residues: MIKDFFILDFSYEIKDNIPLIYIWSIDDEGNSCVVVERNFKPYFYVVYEGNGDEIIENIRKNCEVLLITKVKRKYLGNVVDALLVQTFTPTQIKRCREKISRINGIKSIFDADIRFTMRYSIDFDLRPFTWFKAEVSEVKLEGFRAKKVYILDKILSHYEGKIPELRAIGIDFQIYSKYGSLNPRKDPIVVLSLWSKEGSMQFSLDESMDDLKIIRKFVDYILNYDPDIIYVFDVDVFHWKYITERANSLGVKIDIGRKIGSEVSQGTYGHYSISGRLNVDLVGLLMNERLTGHIDLIEVANYLGISPKRDSLNWYEISRYWDDEKNRDLVKQYSLENAKSIYLLGNFLLSPYSELVKIIGLPLDKLSVASWGNRIEASLIRTAAKSEELIPIRMDNPNRSSKIKKTVIEPKIGIYSDVYVLDISSVYLSVIRKFNISPDTLVKGQCDDCYVSTISNYKFKKEPSGLYKTFLEELSNIQDTRKSKVIEELMSSFYDYIHWINSRWYSREIASAVDELSYEIGKLVIDLIKNSGFEVILANDFLVFVKGGSGDKLNELIFKINSLYDLNLKVRKIYRSLLILGNDRYAGLLEGDKIDIARIGKEDRDLCELVRNVKRKVVEEILISKDVKKAVKLVKSAVIKLRRGEFDIGELITWVHIEKDFSEYDKQLPFVVAARKAIQSGYLISKDSRIGYLIVKGHGSVHDRAEPFFFVKEKNRIDIEYYVDQLLRESLKVLTPLGVSEESLKKTNITDILDMFGASKKK.

The protein belongs to the DNA polymerase type-B family.

The enzyme catalyses DNA(n) + a 2'-deoxyribonucleoside 5'-triphosphate = DNA(n+1) + diphosphate. The sequence is that of DNA polymerase 3 (dpo3) from Saccharolobus shibatae (strain ATCC 51178 / DSM 5389 / JCM 8931 / NBRC 15437 / B12) (Sulfolobus shibatae).